Reading from the N-terminus, the 491-residue chain is NADH-quinone oxidoreductase subunit N 1 (491 aa).

14 helical membrane passes run 9–29 (IAAP…LDLL), 38–58 (PMYV…VPLW), 76–96 (FAAV…LLSF), 104–124 (SGYL…GGAG), 126–146 (LMVI…MIAF), 161–181 (FVLG…IYGA), 211–231 (VGVG…PFHI), 246–266 (AFMA…LLVA), 276–296 (FLLP…TVGI), 304–324 (LMAY…PGLG), 329–349 (SAAA…FAVV), 375–395 (VGVC…TGGF), 410–432 (AWIV…LKVI), and 461–481 (VVLA…GPVS).

Belongs to the complex I subunit 2 family. NDH-1 is composed of 14 different subunits. Subunits NuoA, H, J, K, L, M, N constitute the membrane sector of the complex.

It is found in the cell membrane. It carries out the reaction a quinone + NADH + 5 H(+)(in) = a quinol + NAD(+) + 4 H(+)(out). NDH-1 shuttles electrons from NADH, via FMN and iron-sulfur (Fe-S) centers, to quinones in the respiratory chain. The immediate electron acceptor for the enzyme in this species is believed to be a menaquinone. Couples the redox reaction to proton translocation (for every two electrons transferred, four hydrogen ions are translocated across the cytoplasmic membrane), and thus conserves the redox energy in a proton gradient. The chain is NADH-quinone oxidoreductase subunit N 1 from Symbiobacterium thermophilum (strain DSM 24528 / JCM 14929 / IAM 14863 / T).